The chain runs to 163 residues: Small heat shock protein C1 (163 aa).

In terms of domain architecture, sHSP spans 55–163 (TFYESSSLKS…EQDSREITIN (109 aa)).

The protein belongs to the small heat shock protein (HSP20) family.

The polypeptide is Small heat shock protein C1 (hspC1) (Rickettsia prowazekii (strain Madrid E)).